The following is a 158-amino-acid chain: Large ribosomal subunit protein uL16 (158 aa).

Belongs to the universal ribosomal protein uL16 family. In terms of assembly, part of the 50S ribosomal subunit.

Its function is as follows. Binds 23S rRNA and is also seen to make contacts with the A and possibly P site tRNAs. The polypeptide is Large ribosomal subunit protein uL16 (Prochlorococcus marinus (strain MIT 9303)).